Here is a 460-residue protein sequence, read N- to C-terminus: Cysteine--tRNA ligase (460 aa).

Cysteine 28 provides a ligand contact to Zn(2+). The 'HIGH' region motif lies at 30–40; sequence MTVYDYCHLGH. Zn(2+) is bound by residues cysteine 209, histidine 234, and glutamate 238. The 'KMSKS' region signature appears at 266-270; the sequence is KMSKS. Residue lysine 269 participates in ATP binding.

It belongs to the class-I aminoacyl-tRNA synthetase family. Monomer. Zn(2+) is required as a cofactor.

The protein resides in the cytoplasm. It carries out the reaction tRNA(Cys) + L-cysteine + ATP = L-cysteinyl-tRNA(Cys) + AMP + diphosphate. The chain is Cysteine--tRNA ligase from Pseudomonas syringae pv. tomato (strain ATCC BAA-871 / DC3000).